The sequence spans 68 residues: Copper transport protein ATOX1 (68 aa).

The HMA domain maps to 1-63 (MPKHEFSVDM…TLKKTGKTVS (63 aa)). Cysteine 12 and cysteine 15 together coordinate Cu cation. Position 47 is a phosphoserine (serine 47). Lysine 60 is modified (N6-acetyllysine).

This sequence belongs to the ATX1 family. Homodimer. Interacts with ATP7B. Interacts with ATP7A. Interacts (via dimer form) with SLC31A1 (via C-terminal domain); this interaction improves ATOX1 stability and controls intracellular Cu(I) levels. Ubiquitous.

In terms of biological role, binds and deliver cytosolic copper to the copper ATPase proteins. May be important in cellular antioxidant defense. This chain is Copper transport protein ATOX1, found in Homo sapiens (Human).